We begin with the raw amino-acid sequence, 287 residues long: Large ribosomal subunit protein uL2 (287 aa).

The segment at 221-287 is disordered; that stretch reads RGSVMNPCDH…SKRSRGGRDS (67 aa). Positions 258-287 are enriched in basic residues; sequence KTRKRNKPSNKFVLRKRRKTSKRSRGGRDS.

This sequence belongs to the universal ribosomal protein uL2 family. Part of the 50S ribosomal subunit. Forms a bridge to the 30S subunit in the 70S ribosome.

Its function is as follows. One of the primary rRNA binding proteins. Required for association of the 30S and 50S subunits to form the 70S ribosome, for tRNA binding and peptide bond formation. It has been suggested to have peptidyltransferase activity; this is somewhat controversial. Makes several contacts with the 16S rRNA in the 70S ribosome. The polypeptide is Large ribosomal subunit protein uL2 (Synechococcus sp. (strain WH7803)).